Reading from the N-terminus, the 129-residue chain is MSAKTDEILESLKSLSLLEASELVKQIEEAFGVSAAASAGVVMAAPGAAGGGGEAAEEKTEFDVILEGFEASAKIKVLKAVREATGLGLGDAKALVEAAPKAFKEGVSKEDAEAAKKAIEEAGGKVTLK.

Belongs to the bacterial ribosomal protein bL12 family. Homodimer. Part of the ribosomal stalk of the 50S ribosomal subunit. Forms a multimeric L10(L12)X complex, where L10 forms an elongated spine to which 2 to 4 L12 dimers bind in a sequential fashion. Binds GTP-bound translation factors.

In terms of biological role, forms part of the ribosomal stalk which helps the ribosome interact with GTP-bound translation factors. Is thus essential for accurate translation. The sequence is that of Large ribosomal subunit protein bL12 from Synechococcus sp. (strain CC9605).